A 201-amino-acid polypeptide reads, in one-letter code: Chromophore lyase CpcT/CpeT (201 aa).

The protein belongs to the CpcT/CpeT biliprotein lyase family.

Its subcellular location is the plastid. The protein localises to the organellar chromatophore. Its function is as follows. Covalently attaches a chromophore to Cys residue(s) of phycobiliproteins. This is Chromophore lyase CpcT/CpeT from Paulinella chromatophora.